An 89-amino-acid polypeptide reads, in one-letter code: Small ribosomal subunit protein uS15 (89 aa).

This sequence belongs to the universal ribosomal protein uS15 family. In terms of assembly, part of the 30S ribosomal subunit. Forms a bridge to the 50S subunit in the 70S ribosome, contacting the 23S rRNA.

Functionally, one of the primary rRNA binding proteins, it binds directly to 16S rRNA where it helps nucleate assembly of the platform of the 30S subunit by binding and bridging several RNA helices of the 16S rRNA. Forms an intersubunit bridge (bridge B4) with the 23S rRNA of the 50S subunit in the ribosome. This is Small ribosomal subunit protein uS15 from Buchnera aphidicola subsp. Acyrthosiphon pisum (strain 5A).